A 354-amino-acid polypeptide reads, in one-letter code: NAD-dependent protein deacetylase hst2-2 (354 aa).

A Deacetylase sirtuin-type domain is found at 16–279 (QCQNQTTLDS…REVARHLGWD (264 aa)). Residues 43–63 (GAGL…TGLY) and 126–129 (QNID) each bind NAD(+). Residue His146 is the Proton acceptor of the active site. Residues Cys154, Cys157, Cys178, and Cys183 each coordinate Zn(2+). NAD(+) contacts are provided by residues 220-222 (GTS), 245-247 (NRE), and Cys265.

The protein belongs to the sirtuin family. Class I subfamily. The cofactor is Zn(2+).

Its subcellular location is the nucleus. It carries out the reaction N(6)-acetyl-L-lysyl-[protein] + NAD(+) + H2O = 2''-O-acetyl-ADP-D-ribose + nicotinamide + L-lysyl-[protein]. NAD-dependent histone deacetylase, which could function in telomeric silencing, cell cycle progression and chromosome stability. The chain is NAD-dependent protein deacetylase hst2-2 from Emericella nidulans (strain FGSC A4 / ATCC 38163 / CBS 112.46 / NRRL 194 / M139) (Aspergillus nidulans).